The following is a 263-amino-acid chain: Pimeloyl-[acyl-carrier protein] methyl ester esterase (263 aa).

Residues tryptophan 28, serine 86–leucine 87, and phenylalanine 149–glutamine 153 contribute to the substrate site. Serine 86 (nucleophile) is an active-site residue. Active-site residues include aspartate 213 and histidine 240. Substrate is bound at residue histidine 240.

It belongs to the AB hydrolase superfamily. Carboxylesterase BioH family. In terms of assembly, monomer.

The protein localises to the cytoplasm. The enzyme catalyses 6-carboxyhexanoyl-[ACP] methyl ester + H2O = 6-carboxyhexanoyl-[ACP] + methanol + H(+). Its pathway is cofactor biosynthesis; biotin biosynthesis. Functionally, the physiological role of BioH is to remove the methyl group introduced by BioC when the pimeloyl moiety is complete. It allows to synthesize pimeloyl-ACP via the fatty acid synthetic pathway through the hydrolysis of the ester bonds of pimeloyl-ACP esters. The polypeptide is Pimeloyl-[acyl-carrier protein] methyl ester esterase (Shewanella oneidensis (strain ATCC 700550 / JCM 31522 / CIP 106686 / LMG 19005 / NCIMB 14063 / MR-1)).